The following is a 70-amino-acid chain: Putative membrane protein insertion efficiency factor (70 aa).

The protein belongs to the UPF0161 family.

The protein resides in the cell inner membrane. In terms of biological role, could be involved in insertion of integral membrane proteins into the membrane. In Sphingopyxis alaskensis (strain DSM 13593 / LMG 18877 / RB2256) (Sphingomonas alaskensis), this protein is Putative membrane protein insertion efficiency factor.